We begin with the raw amino-acid sequence, 203 residues long: Small ribosomal subunit protein uS4 (203 aa).

The region spanning 93–156 (RRLDNVVYRL…LKVPAILEAV (64 aa)) is the S4 RNA-binding domain.

This sequence belongs to the universal ribosomal protein uS4 family. As to quaternary structure, part of the 30S ribosomal subunit. Contacts protein S5. The interaction surface between S4 and S5 is involved in control of translational fidelity.

One of the primary rRNA binding proteins, it binds directly to 16S rRNA where it nucleates assembly of the body of the 30S subunit. Functionally, with S5 and S12 plays an important role in translational accuracy. The chain is Small ribosomal subunit protein uS4 from Streptococcus pneumoniae serotype 2 (strain D39 / NCTC 7466).